Here is a 187-residue protein sequence, read N- to C-terminus: Elongation factor P (187 aa).

The protein belongs to the elongation factor P family.

Its subcellular location is the cytoplasm. The protein operates within protein biosynthesis; polypeptide chain elongation. Functionally, involved in peptide bond synthesis. Stimulates efficient translation and peptide-bond synthesis on native or reconstituted 70S ribosomes in vitro. Probably functions indirectly by altering the affinity of the ribosome for aminoacyl-tRNA, thus increasing their reactivity as acceptors for peptidyl transferase. The chain is Elongation factor P (efp) from Helicobacter pylori (strain J99 / ATCC 700824) (Campylobacter pylori J99).